Consider the following 786-residue polypeptide: Constitutive coactivator of peroxisome proliferator-activated receptor gamma (786 aa).

The segment at 1 to 561 (MGVRGLQGFV…GTPSLEVLWL (561 aa)) is mediates transactivation of PPARG. 2 disordered regions span residues 371–413 (PNQE…KLPS) and 738–786 (HWDS…WRRY). The span at 750 to 771 (QGYSSYRTDSTHGHSGQSWRNQ) shows a compositional bias: polar residues.

The protein belongs to the constitutive coactivator of PPAR-gamma family. As to quaternary structure, interacts with ESR1 and RXRA. Interacts with PPARG; in a ligand-independent manner. As to expression, ubiquitously expressed (at protein level).

It is found in the nucleus. Functionally, functions as a transactivator of PPARG and ESR1. Functions in adipogenesis through PPARG activation. This is Constitutive coactivator of peroxisome proliferator-activated receptor gamma (Fam120b) from Mus musculus (Mouse).